A 136-amino-acid polypeptide reads, in one-letter code: Galectin-7 (136 aa).

Residues 6-136 (HKTSLPQGVR…DVQLHSLNIF (131 aa)) enclose the Galectin domain. 70 to 76 (WGREERG) serves as a coordination point for a beta-D-galactoside.

As to quaternary structure, monomer.

It is found in the cytoplasm. It localises to the nucleus. Its subcellular location is the secreted. Could be involved in cell-cell and/or cell-matrix interactions necessary for normal growth control. Pro-apoptotic protein that functions intracellularly upstream of JNK activation and cytochrome c release. This is Galectin-7 (Lgals7) from Mus musculus (Mouse).